Consider the following 193-residue polypeptide: Cerebellin-1 (193 aa).

The first 21 residues, 1-21, serve as a signal peptide directing secretion; sequence MLGVVELLLLGAAWLAGPARG. An N-linked (GlcNAc...) asparagine glycan is attached at Asn-23. Residues 34-38 form an essential for interaction with NRXN1 and linker of two C1q trimers into disulfide-linked hexamers region; sequence CLVVC. Residues 57-193 enclose the C1q domain; it reads SGSAKVAFSA…TFSGFLVFPL (137 aa). Residues 62–193 are necessary for interaction with CBLN3, and homotrimerization; sequence VAFSAIRSTN…TFSGFLVFPL (132 aa). A glycan (N-linked (GlcNAc...) asparagine) is linked at Asn-79. Positions 122–147 are essential for interaction with GRID2; it reads YNRQTIQVSLMLNGWPVISAFAGDQD.

Homohexamer; disulfide-linked homotrimers. The trimers are assembled via the globular C1q domains. The trimers associate via N-terminal cysteine residues to form disulfide-linked hexamers. May form oligomers with CBLN2, CBLN3 and CBLN4 prior to secretion. Once secreted, does not interact with other CBLN family members. Interacts with GRID1. Interacts with NRXN1 and NRXN2 long (alpha) and short (beta) isoforms produced by alternative promoter usage. Competes with NLGN1 for NRXN1-binding. Weakly interacts with NRXN3 short isoform and not at all with NRXN3 long isoform. Interacts (via C1q domain) with GRID2; GRID2-binding is calcium-independent; CBLN1 hexamers anchor GRID2 N-terminal domain dimers to monomeric NRXN1 isoform beta; promotes synaptogenesis and mediates the D-Serine-dependent long term depression signals and AMPA receptor endocytosis. Post-translationally, the proteolytic processing to yield cerebellin seems to occur either prior to the secretion by presynaptic neurons and subsequent oligomerization or in some other location after release of the mature protein. In terms of processing, sialoglycoprotein.

It is found in the secreted. Its subcellular location is the postsynaptic cell membrane. In terms of biological role, required for synapse integrity and synaptic plasticity. During cerebellar synapse formation, essential for the matching and maintenance of pre- and post-synaptic elements at parallel fiber-Purkinje cell synapses, the establishment of the proper pattern of climbing fiber-Purkinje cell innervation, and induction of long-term depression at parallel fiber-Purkinje cell synapses. Plays a role as a synaptic organizer that acts bidirectionally on both pre- and post-synaptic components. On the one hand induces accumulation of synaptic vesicles in the pre-synaptic part by binding with NRXN1 and in other hand induces clustering of GRID2 and its associated proteins at the post-synaptic site through association of GRID2. NRXN1-CBLN1-GRID2 complex directly induces parallel fiber protrusions that encapsulate spines of Purkinje cells leading to accumulation of GRID2 and synaptic vesicles. Required for CBLN3 export from the endoplasmic reticulum and secretion. NRXN1-CBLN1-GRID2 complex mediates the D-Serine-dependent long term depression signals and AMPA receptor endocytosis. Essential for long-term maintenance but not establishment of excitatory synapses. Inhibits the formation and function of inhibitory GABAergic synapses in cerebellar Purkinje cells. The cerebellin peptide exerts neuromodulatory functions. Directly stimulates norepinephrine release via the adenylate cyclase/PKA-dependent signaling pathway; and indirectly enhances adrenocortical secretion in vivo, through a paracrine mechanism involving medullary catecholamine release. This Bos taurus (Bovine) protein is Cerebellin-1.